The sequence spans 563 residues: Solute carrier family 22 member 1 (563 aa).

Residues 1 to 21 (MLTVDDVLEQVGEFGWFQKQT) lie on the Cytoplasmic side of the membrane. A helical transmembrane segment spans residues 22–42 (FLILCLLSAAFAPIYVGIVFL). Residues 43–144 (AFTPDHRCRS…LVCDDSWKVD (102 aa)) are Extracellular-facing. Residue Asn-71 is glycosylated (N-linked (GlcNAc...) asparagine). The helical transmembrane segment at 145–165 (LFQSCVNLGFFLGSLGVGYIA) threads the bilayer. Residues 166-171 (DRFGRK) lie on the Cytoplasmic side of the membrane. A helical membrane pass occupies residues 172-192 (VCLLATTLTCASLGVLTAVAP). The Extracellular portion of the chain corresponds to 193-196 (DYTS). The helical transmembrane segment at 197–219 (LLIFRLLQGLVSKGSWTAGYTLI) threads the bilayer. Topologically, residues 220–232 (TEFVGLGYRRTVA) are cytoplasmic. A helical membrane pass occupies residues 233–253 (ILYQMAFTVGLVLLSGLAYIL). Residues 254–257 (PHWR) lie on the Extracellular side of the membrane. Residues 258–278 (WLQLAVSLPIFLLLFRFWFVP) traverse the membrane as a helical segment. The Proline-rich sequence motif lies at 278–282 (PESPR). Residues 279–342 (ESPRWLLSQK…FRTPNLRKYT (64 aa)) lie on the Cytoplasmic side of the membrane. Ser-328 is modified (phosphoserine). Residues 343 to 363 (FILMYLWFTSSVVYQGLIMHV) traverse the membrane as a helical segment. The Extracellular portion of the chain corresponds to 364–371 (GATGGNLY). A helical membrane pass occupies residues 372–392 (LDFLYSALVEFPAGFIILVTI). Over 393-398 (DRFGRR) the chain is Cytoplasmic. The chain crosses the membrane as a helical span at residues 399 to 418 (YPLATSNLAAGLACFLMIFI). At 419–423 (PHDLP) the chain is on the extracellular side. A helical transmembrane segment spans residues 424 to 446 (WLNIMVACVGRMGITIVFQMVCL). Residues 447 to 459 (VNAELFPTFIRNL) lie on the Cytoplasmic side of the membrane. The helical transmembrane segment at 460 to 480 (GMMVCSSLCDLGGVLTPFLVF) threads the bilayer. Topologically, residues 481–487 (RLMEVWQ) are extracellular. The helical transmembrane segment at 488–508 (GSPLILFAALGLVAGGMTLLL) threads the bilayer. Residues 509–563 (PETKGVTLPETIEDAENLQRKAKPKENKIYLQVQTSELNTQAAERDASQGTAQQK) are Cytoplasmic-facing.

It belongs to the major facilitator (TC 2.A.1) superfamily. Organic cation transporter (TC 2.A.1.19) family. Post-translationally, phosphorylated.

Its subcellular location is the basolateral cell membrane. It is found in the apical cell membrane. The protein localises to the lateral cell membrane. It localises to the basal cell membrane. The protein resides in the cell membrane. The enzyme catalyses 1-methylnicotinamide(out) = 1-methylnicotinamide(in). It carries out the reaction dopamine(out) = dopamine(in). The catalysed reaction is serotonin(out) = serotonin(in). It catalyses the reaction (R)-adrenaline(out) = (R)-adrenaline(in). The enzyme catalyses (R)-noradrenaline(out) = (R)-noradrenaline(in). It carries out the reaction histamine(out) = histamine(in). The catalysed reaction is guanidine(out) = guanidine(in). It catalyses the reaction choline(out) = choline(in). The enzyme catalyses acetylcholine(in) = acetylcholine(out). It carries out the reaction thiamine(in) = thiamine(out). The catalysed reaction is spermidine(in) = spermidine(out). It catalyses the reaction agmatine(out) = agmatine(in). The enzyme catalyses putrescine(out) = putrescine(in). It carries out the reaction (R)-carnitine(in) = (R)-carnitine(out). The catalysed reaction is O-isobutanoyl-(R)-carnitine(in) = O-isobutanoyl-(R)-carnitine(out). It catalyses the reaction O-acetyl-(R)-carnitine(in) = O-acetyl-(R)-carnitine(out). The enzyme catalyses O-3-hydroxybutanoyl-(R)-carnitine(in) = O-3-hydroxybutanoyl-(R)-carnitine(out). It carries out the reaction O-propanoyl-(R)-carnitine(in) = O-propanoyl-(R)-carnitine(out). The catalysed reaction is O-butanoyl-(R)-carnitine(in) = O-butanoyl-(R)-carnitine(out). It catalyses the reaction O-2-methylbutanoyl-(R)-carnitine(in) = O-2-methylbutanoyl-(R)-carnitine(out). The enzyme catalyses O-3-methylbutanoyl-(R)-carnitine(in) = O-3-methylbutanoyl-(R)-carnitine(out). It carries out the reaction O-hexanoyl-(R)-carnitine(in) = O-hexanoyl-(R)-carnitine(out). The catalysed reaction is L-histidyl-L-proline diketopiperazine(in) = L-histidyl-L-proline diketopiperazine(out). It catalyses the reaction (R)-salsolinol(in) = (R)-salsolinol(out). The enzyme catalyses prostaglandin F2alpha(out) = prostaglandin F2alpha(in). It carries out the reaction prostaglandin E2(out) = prostaglandin E2(in). With respect to regulation, phosphorylation of the transporter leads to changes in its substrate affinity, resulting in a regulation of the transport activity. In contrast with rat ortholog, ASP uptake is inhibited by protein kinase A (PKA) and C (PKC) activation. ASP uptake is also endogenously activated by calmodulin, the calmodulin-dependent kinase II and LCK tyrosine kinase. Inhibited by cGMP, most likely through a cGMP-binding protein that interacts with OCT1. Its function is as follows. Electrogenic voltage-dependent transporter that mediates the transport of a variety of organic cations such as endogenous bioactive amines, cationic drugs and xenobiotics. Functions as a pH- and Na(+)-independent, bidirectional transporter. Cation cellular uptake or release is driven by the electrochemical potential (i.e. membrane potential and concentration gradient) and substrate selectivity. Hydrophobicity is a major requirement for recognition in polyvalent substrates and inhibitors. Primarily expressed in the basolateral membrane of hepatocytes and proximal tubules and involved in the uptake and disposition of cationic compounds from the blood by hepatic and renal clearance. Most likely functions as an uptake carrier in enterocytes contributing to the intestinal elimination of organic cations from the systemic circulation. Transports endogenous monoamines such as N-1-methylnicotinamide (NMN), guanidine, neurotransmitters dopamine, serotonin, noradrenaline, adrenaline and histamine, and quaternary ammonium compound such as choline. Also transports natural polyamines such as spermidine, agmatine and putrescine at low affinity, but relatively high turnover. Involved in the hepatic and intestinal uptake of the vitamin B1/thiamine, hence regulating hepatic lipid and energy metabolism. Contributes to the influx and efflux of fatty acid carriers carnitines and acylcarnitines across the basolateral membrane of hepatocytes, from the liver to the systemic circulation and inversely and may be involved in regulating the systemic availability of hepatic acylcarnitines. Also capable of transporting non-amine endogenous compounds such as prostaglandin E2 (PGE2) and prostaglandin F2-alpha (PGF2-alpha). May contribute to the transport of cationic compounds in testes across the blood-testis-barrier. Also mediates the uptake of xenobiotics tributylmethylammonium (TBuMA), quinidine, N-methyl-quinine (NMQ), N-methyl-quinidine (NMQD) N-(4,4-azo-n-pentyl)-quinuclidine (APQ), azidoprocainamide methoiodide (AMP), N-(4,4-azo-n-pentyl)-21-deoxyajmalinium (APDA) and 4-(4-(dimethylamino)styryl)-N-methylpyridinium (ASP). The sequence is that of Solute carrier family 22 member 1 (SLC22A1) from Bos taurus (Bovine).